Here is a 209-residue protein sequence, read N- to C-terminus: Uracil phosphoribosyltransferase (209 aa).

5-phospho-alpha-D-ribose 1-diphosphate is bound by residues R79, R104, and 131–139 (DPMLATGGS). Residues I194 and 199 to 201 (GDA) contribute to the uracil site. Residue D200 coordinates 5-phospho-alpha-D-ribose 1-diphosphate.

It belongs to the UPRTase family. Requires Mg(2+) as cofactor.

The catalysed reaction is UMP + diphosphate = 5-phospho-alpha-D-ribose 1-diphosphate + uracil. Its pathway is pyrimidine metabolism; UMP biosynthesis via salvage pathway; UMP from uracil: step 1/1. Allosterically activated by GTP. Its function is as follows. Catalyzes the conversion of uracil and 5-phospho-alpha-D-ribose 1-diphosphate (PRPP) to UMP and diphosphate. In Streptococcus suis (strain 05ZYH33), this protein is Uracil phosphoribosyltransferase.